Reading from the N-terminus, the 424-residue chain is MKFASKKNNQKNSSKNDERYRELDNLVQEGNGSRLGGGSCLGKCAHVFKLIFKEIKDNIFIYILSIIYLSVSVMNTIFAKRTLNKIGNYSFVTSETHNFICMIMFFIVYSLFGNKKGNSKERHRSFNLQFFAISMLDACSVILAFIGLTRTTGNIQSFVLQLSIPINMFFCFLILRYRYHLYNYLGAVIIVVTIALVEMKLSFETQEENSIIFNLVLISSLIPVCFSNMTREIVFKKYKIDILRLNAMVSFFQLFTSCLILPVYTLPFLKQLHLPYNEIWTNIKNGFACLFLGRNTVVENCGLGMAKLCDDCDGAWKTFALFSFFDICDNLITSYIIDKFSTMTYTIVSCIQGPALAIAYYFKFLAGDVVREPRLLDFVTLFGYLFGSIIYRVGNIILERKKMRNEENEDSEGELTNVDSIITQ.

Residues Met1–Lys49 are Cytoplasmic-facing. An intramembrane segment occupies Leu50 to Asn58. The chain crosses the membrane as a helical span at residues Ile59–Leu83. Over Asn84–Tyr89 the chain is Vacuolar. The chain crosses the membrane as a helical span at residues Ser90–Leu111. Topologically, residues Phe112 to Phe126 are cytoplasmic. The chain crosses the membrane as a helical span at residues Asn127–Gly147. Over Leu148–Thr152 the chain is Vacuolar. Residues Gly153–Leu173 form a helical membrane-spanning segment. Over Ile174–His180 the chain is Cytoplasmic. The helical transmembrane segment at Leu181–Ser202 threads the bilayer. Residues Phe203–Ser210 lie on the Vacuolar side of the membrane. Residues Ile211–Lys236 traverse the membrane as a helical segment. Topologically, residues Lys237–Asp241 are cytoplasmic. The helical transmembrane segment at Ile242–Val263 threads the bilayer. Topologically, residues Tyr264–Ile279 are vacuolar. Residues Trp280–Leu292 lie within the membrane without spanning it. Disulfide bonds link Cys289-Cys312 and Cys301-Cys309. The Vacuolar portion of the chain corresponds to Gly293–Gly314. The chain crosses the membrane as a helical span at residues Ala315–Lys339. At Phe340–Met343 the chain is on the cytoplasmic side. Residues Thr344–Tyr361 form a helical membrane-spanning segment. The Vacuolar portion of the chain corresponds to Phe362–Arg374. Residues Leu375–Ile397 form a helical membrane-spanning segment. Over Leu398–Gln424 the chain is Cytoplasmic.

Belongs to the CRT-like transporter family. As to quaternary structure, monomer.

It localises to the membrane. Its subcellular location is the vacuole membrane. The enzyme catalyses L-arginine(in) = L-arginine(out). It carries out the reaction L-lysine(in) = L-lysine(out). It catalyses the reaction L-histidine(out) = L-histidine(in). The catalysed reaction is Fe(3+)(in) = Fe(3+)(out). The enzyme catalyses Fe(2+)(in) = Fe(2+)(out). Its function is as follows. Nutrient transporter. Substrate transport is pH-dependent. Can transport arginine, lysine, histidine and peptides. Involved in maintaining the osmotic homeostasis of the digestive vacuole. Required for the normal asexual intraerythrocytic proliferation of parasites. Can transport Fe(2+) and Fe(3+). This chain is Chloroquine resistance transporter, found in Plasmodium falciparum (isolate 7G8).